Consider the following 135-residue polypeptide: Interleukin-4 (135 aa).

Residues 1 to 24 (MGLTYQLIPVLVCLLVCTSHLVHG) form the signal peptide. Intrachain disulfides connect Cys-27/Cys-135, Cys-48/Cys-85, and Cys-70/Cys-105. N-linked (GlcNAc...) asparagine glycosylation is present at Asn-62.

This sequence belongs to the IL-4/IL-13 family.

Its subcellular location is the secreted. In terms of biological role, participates in at least several B-cell activation processes as well as of other cell types. It is a costimulator of DNA-synthesis. It induces the expression of class II MHC molecules on resting B-cells. It enhances both secretion and cell surface expression of IgE and IgG1. It also regulates the expression of the low affinity Fc receptor for IgE (CD23) on both lymphocytes and monocytes. Positively regulates IL31RA expression in macrophages. Stimulates autophagy in dendritic cells by interfering with mTORC1 signaling and through the induction of RUFY4. In Bubalus bubalis (Domestic water buffalo), this protein is Interleukin-4 (IL4).